The following is a 1207-amino-acid chain: DNA-directed RNA polymerase subunit beta' (1207 aa).

Zn(2+) is bound by residues Cys-60, Cys-62, Cys-75, and Cys-78. Mg(2+)-binding residues include Asp-450, Asp-452, and Asp-454. 4 residues coordinate Zn(2+): Cys-819, Cys-893, Cys-900, and Cys-903.

It belongs to the RNA polymerase beta' chain family. As to quaternary structure, the RNAP catalytic core consists of 2 alpha, 1 beta, 1 beta' and 1 omega subunit. When a sigma factor is associated with the core the holoenzyme is formed, which can initiate transcription. The cofactor is Mg(2+). Zn(2+) serves as cofactor.

It carries out the reaction RNA(n) + a ribonucleoside 5'-triphosphate = RNA(n+1) + diphosphate. Functionally, DNA-dependent RNA polymerase catalyzes the transcription of DNA into RNA using the four ribonucleoside triphosphates as substrates. In Streptococcus pyogenes serotype M12 (strain MGAS2096), this protein is DNA-directed RNA polymerase subunit beta'.